We begin with the raw amino-acid sequence, 367 residues long: MTRQIIPSSEFASLFLQARPLIDVRAPIEFTKGAFPSAINLPLMKDSEREKVGTCYKQQGQESAIKLGHALVSGTVKEQRIAAWRKAIEANPSSYLYCFRGGLRSQLSQQWIKEAGFDIPYIQGGYKALRTFLIQILESSAALNSMLILSGRTGSGKTDFLQLRDEAVDLEQLANHRGSSFGKNLDPQPSQINFENQLAIAVLQHQTKHHRHLLLEDESFLIGRSALPKAFYNSMQHADIVLLEEDDEQRLQRLLFDYVDNKLASFVSRLGDEAGLKAFGDYLNASLNGIKKRLGGKFLQELLDSVARALAHQISQNDTSLHLDWISQLLTRYYDPMYDYQLSQKQQRVLFKGDHASMHAWLDELRK.

The Rhodanese domain occupies 15–138 (FLQARPLIDV…LRTFLIQILE (124 aa)). Cys98 acts as the S-selanylcysteine intermediate in catalysis.

The protein belongs to the SelU family. In terms of assembly, monomer.

The enzyme catalyses 5-methylaminomethyl-2-thiouridine(34) in tRNA + selenophosphate + (2E)-geranyl diphosphate + H2O + H(+) = 5-methylaminomethyl-2-selenouridine(34) in tRNA + (2E)-thiogeraniol + phosphate + diphosphate. It catalyses the reaction 5-methylaminomethyl-2-thiouridine(34) in tRNA + (2E)-geranyl diphosphate = 5-methylaminomethyl-S-(2E)-geranyl-thiouridine(34) in tRNA + diphosphate. It carries out the reaction 5-methylaminomethyl-S-(2E)-geranyl-thiouridine(34) in tRNA + selenophosphate + H(+) = 5-methylaminomethyl-2-(Se-phospho)selenouridine(34) in tRNA + (2E)-thiogeraniol. The catalysed reaction is 5-methylaminomethyl-2-(Se-phospho)selenouridine(34) in tRNA + H2O = 5-methylaminomethyl-2-selenouridine(34) in tRNA + phosphate. In terms of biological role, involved in the post-transcriptional modification of the uridine at the wobble position (U34) of tRNA(Lys), tRNA(Glu) and tRNA(Gln). Catalyzes the conversion of 2-thiouridine (S2U-RNA) to 2-selenouridine (Se2U-RNA). Acts in a two-step process involving geranylation of 2-thiouridine (S2U) to S-geranyl-2-thiouridine (geS2U) and subsequent selenation of the latter derivative to 2-selenouridine (Se2U) in the tRNA chain. The protein is tRNA 2-selenouridine synthase of Shewanella denitrificans (strain OS217 / ATCC BAA-1090 / DSM 15013).